Consider the following 370-residue polypeptide: Phosphate acyltransferase (370 aa).

The interval 349 to 370 is disordered; the sequence is SAGRAGQDAPDEMAAPGRSEKR.

This sequence belongs to the PlsX family. As to quaternary structure, homodimer. Probably interacts with PlsY.

The protein resides in the cytoplasm. The enzyme catalyses a fatty acyl-[ACP] + phosphate = an acyl phosphate + holo-[ACP]. The protein operates within lipid metabolism; phospholipid metabolism. In terms of biological role, catalyzes the reversible formation of acyl-phosphate (acyl-PO(4)) from acyl-[acyl-carrier-protein] (acyl-ACP). This enzyme utilizes acyl-ACP as fatty acyl donor, but not acyl-CoA. This chain is Phosphate acyltransferase, found in Cereibacter sphaeroides (strain ATCC 17029 / ATH 2.4.9) (Rhodobacter sphaeroides).